The following is a 228-amino-acid chain: UPF0758 protein H16_A3033 (228 aa).

The MPN domain maps to 102 to 224; the sequence is GFDGPAAVRN…IRSLADCCDR (123 aa). Residues H173, H175, and D186 each coordinate Zn(2+). Residues 173 to 186 carry the JAMM motif motif; the sequence is HNHPRGTTAPSQSD.

This sequence belongs to the UPF0758 family.

The protein is UPF0758 protein H16_A3033 of Cupriavidus necator (strain ATCC 17699 / DSM 428 / KCTC 22496 / NCIMB 10442 / H16 / Stanier 337) (Ralstonia eutropha).